The sequence spans 87 residues: UPF0335 protein Avi_3695 (87 aa).

Belongs to the UPF0335 family.

The protein is UPF0335 protein Avi_3695 of Allorhizobium ampelinum (strain ATCC BAA-846 / DSM 112012 / S4) (Agrobacterium vitis (strain S4)).